Reading from the N-terminus, the 63-residue chain is Protein CYSTEINE-RICH TRANSMEMBRANE MODULE 12 (63 aa).

The interval Met1–Phe34 is disordered. Residues Lys40–Cys56 form a helical membrane-spanning segment.

Belongs to the CYSTM1 family. As to quaternary structure, homodimer and heterodimers. Binds weakly to CYSTM4, CYSTM6 and CYSTM7. As to expression, mostly expressed in roots, flowers and siliques and, to a lower extent, in stems and leaves.

It localises to the cell membrane. Its subcellular location is the cytoplasm. Its function is as follows. Involved in resistance to abiotic stress. This is Protein CYSTEINE-RICH TRANSMEMBRANE MODULE 12 from Arabidopsis thaliana (Mouse-ear cress).